Consider the following 156-residue polypeptide: MSKPLRGRHQARKRAVDLLFEAEARGLSPAEVVDVRTGLADTNPEVAPLQPYTAAVARGVGDHAAHIDDLISSHLQGWTLDRLPAVDRAILRVAVWELLYADDVPEPVAVDEAVQLAKELSTDDSPGFVNGVLGQVMLVTPQIRAAARAVRGPRDT.

Belongs to the NusB family.

Functionally, involved in transcription antitermination. Required for transcription of ribosomal RNA (rRNA) genes. Binds specifically to the boxA antiterminator sequence of the ribosomal RNA (rrn) operons. This is Transcription antitermination protein NusB from Mycolicibacterium paratuberculosis (strain ATCC BAA-968 / K-10) (Mycobacterium paratuberculosis).